A 568-amino-acid chain; its full sequence is Hemagglutinin-neuraminidase (568 aa).

Residues Met-1–Arg-18 lie on the Intravirion side of the membrane. The chain crosses the membrane as a helical span at residues Thr-19 to Val-39. At Thr-40 to Thr-568 the chain is on the virion surface side. Residues Asn-44 and Asn-111 are each glycosylated (N-linked (GlcNAc...) asparagine; by host). 3 disulfides stabilise this stretch: Cys-162–Cys-186, Cys-176–Cys-237, and Cys-228–Cys-241. Residues Asn-224–Ser-229 form an involved in neuraminidase activity region. Asn-268 and Asn-280 each carry an N-linked (GlcNAc...) asparagine; by host glycan. Disulfide bonds link Cys-334–Cys-455, Cys-366–Cys-376, and Cys-449–Cys-459. Residue Asn-382 is glycosylated (N-linked (GlcNAc...) asparagine; by host). Asn-513 carries an N-linked (GlcNAc...) asparagine; by host glycan. Cys-531 and Cys-542 form a disulfide bridge.

Belongs to the paramyxoviruses hemagglutinin-neuraminidase family. In terms of assembly, homotetramer; composed of disulfide-linked homodimers.

The protein localises to the virion membrane. It localises to the host cell membrane. The enzyme catalyses Hydrolysis of alpha-(2-&gt;3)-, alpha-(2-&gt;6)-, alpha-(2-&gt;8)- glycosidic linkages of terminal sialic acid residues in oligosaccharides, glycoproteins, glycolipids, colominic acid and synthetic substrates.. In terms of biological role, attaches the virus to sialic acid-containing cell receptors and thereby initiating infection. Binding of HN protein to the receptor induces a conformational change that allows the F protein to trigger virion/cell membranes fusion. Its function is as follows. Neuraminidase activity ensures the efficient spread of the virus by dissociating the mature virions from the neuraminic acid containing glycoproteins. The protein is Hemagglutinin-neuraminidase (HN) of Simiiformes (SV41).